Consider the following 426-residue polypeptide: MKLKSRFTSIIGVITLFFSQTVTAESDVVISVDEGVSMAQPIAVVPFKANGGVPADVGQIIADDLRNSGKFTPVERSKLPAQPGSAAEVNSQQWTDIGVDSVVVGQVTPTGGGYNVAYQLVDTLSNPATVLAQGAFNVPAAQIRQGAHTVSDQVFEKITQIRGAFRTKIAYVVQRGVSSYELRVSDYDGYNAFTVVKSKEPLMSPEWSPDGSRLAYVTFENKKAQVVVHDLRSGSRRVVAALRGHNGAPAFSPDGSRIAFASNQDGELDIYVVGANGGKPSKLTANAGNNTEPSWSPDGSTIYFTSDRAGSPQVYRMGLSGGGASPMGGSGSYNAKVSSDGKNLIMIAGDKVVKRDLASGGTEVLSSTFLDESPSISPNGIMVIYSSTKGTSKVLQLVSADGRFKANLPGAGGQFKFPAWSPYLTK.

Residues 1 to 24 (MKLKSRFTSIIGVITLFFSQTVTA) form the signal peptide.

The protein belongs to the TolB family. In terms of assembly, the Tol-Pal system is composed of five core proteins: the inner membrane proteins TolA, TolQ and TolR, the periplasmic protein TolB and the outer membrane protein Pal. They form a network linking the inner and outer membranes and the peptidoglycan layer.

It localises to the periplasm. Part of the Tol-Pal system, which plays a role in outer membrane invagination during cell division and is important for maintaining outer membrane integrity. In Actinobacillus pleuropneumoniae serotype 3 (strain JL03), this protein is Tol-Pal system protein TolB.